A 208-amino-acid chain; its full sequence is Thymidylate kinase (208 aa).

ATP is bound at residue Gly10–Thr17.

Belongs to the thymidylate kinase family.

The catalysed reaction is dTMP + ATP = dTDP + ADP. Phosphorylation of dTMP to form dTDP in both de novo and salvage pathways of dTTP synthesis. In Bacillus mycoides (strain KBAB4) (Bacillus weihenstephanensis), this protein is Thymidylate kinase.